A 185-amino-acid chain; its full sequence is dTDP-4-dehydrorhamnose 3,5-epimerase (185 aa).

Residues R23, E28, 47 to 49 (QDN), and R59 each bind substrate. The active-site Proton acceptor is H62. K72 and H119 together coordinate substrate. Y132 serves as the catalytic Proton donor. Substrate is bound by residues D143 and K168.

Belongs to the dTDP-4-dehydrorhamnose 3,5-epimerase family. Homodimer.

The enzyme catalyses dTDP-4-dehydro-6-deoxy-alpha-D-glucose = dTDP-4-dehydro-beta-L-rhamnose. Its pathway is carbohydrate biosynthesis; dTDP-L-rhamnose biosynthesis. The protein operates within bacterial outer membrane biogenesis; LPS O-antigen biosynthesis. In terms of biological role, catalyzes the epimerization of the C3' and C5'positions of dTDP-6-deoxy-D-xylo-4-hexulose, forming dTDP-6-deoxy-L-lyxo-4-hexulose. The polypeptide is dTDP-4-dehydrorhamnose 3,5-epimerase (rfbC) (Escherichia coli (strain K12)).